The primary structure comprises 168 residues: Photosystem I assembly protein Ycf3 (168 aa).

3 TPR repeats span residues 35-68 (AFTY…EIDP), 72-105 (SYIL…NPFL), and 120-153 (GEQA…TPGN).

This sequence belongs to the Ycf3 family.

Its subcellular location is the plastid. It localises to the chloroplast thylakoid membrane. Functionally, essential for the assembly of the photosystem I (PSI) complex. May act as a chaperone-like factor to guide the assembly of the PSI subunits. The protein is Photosystem I assembly protein Ycf3 of Panax ginseng (Korean ginseng).